The chain runs to 116 residues: Early 4 ORF3 protein (116 aa).

This sequence belongs to the adenoviridae E4 ORF3 family. Homodimer. Multimerizes through C-terminus tail by reciprocal or nonreciprocal interactions. Interacts with host PML isoform 2 C-terminal disordered region. Interacts with E1B-55k; this interaction is necessary for E1B 55 kDa protein to localize to the nuclear matrix fraction of the cell. May interact with host TRIM24, CREBBP, EP300, PRKDC and the MRN complex MRE11/RAD50/NBS1; these interactions may happen through nuclear bodies complexes.

The protein resides in the host nucleus. Its function is as follows. Forms a multivalent network in host nucleus that inhibits nuclear bodies and prevents antiviral cellular activities. The network is made of multimerized dimers and surrounds adenovirus replication centers and nucleolus. Plays a role in splicing of the major late transcript. Prevents viral genome concatemer formation. This is Early 4 ORF3 protein from Human adenovirus C serotype 2 (HAdV-2).